A 100-amino-acid chain; its full sequence is Urease subunit gamma (100 aa).

Belongs to the urease gamma subunit family. Heterotrimer of UreA (gamma), UreB (beta) and UreC (alpha) subunits. Three heterotrimers associate to form the active enzyme.

The protein resides in the cytoplasm. The enzyme catalyses urea + 2 H2O + H(+) = hydrogencarbonate + 2 NH4(+). Its pathway is nitrogen metabolism; urea degradation; CO(2) and NH(3) from urea (urease route): step 1/1. The chain is Urease subunit gamma from Rhizobium leguminosarum bv. viciae.